A 472-amino-acid chain; its full sequence is UDP-N-acetylmuramate--L-alanine ligase (472 aa).

An ATP-binding site is contributed by 119–125 (GTHGKTT).

It belongs to the MurCDEF family.

It is found in the cytoplasm. It carries out the reaction UDP-N-acetyl-alpha-D-muramate + L-alanine + ATP = UDP-N-acetyl-alpha-D-muramoyl-L-alanine + ADP + phosphate + H(+). It functions in the pathway cell wall biogenesis; peptidoglycan biosynthesis. In terms of biological role, cell wall formation. The chain is UDP-N-acetylmuramate--L-alanine ligase from Caulobacter sp. (strain K31).